The chain runs to 422 residues: Zinc-regulated transporter 2 (422 aa).

Topologically, residues 1-27 (MVDLIARDDSVDTCQASNGYNGHAGLR) are extracellular. Residues 28 to 48 (ILAVFIILISSGLGVYFPILS) traverse the membrane as a helical segment. The Cytoplasmic portion of the chain corresponds to 49 to 60 (SRYSFIRLPNWC). The chain crosses the membrane as a helical span at residues 61 to 81 (FFIAKFFGSGVIVATAFVHLL). Residues 82–99 (QPAAEALGDECLGGTFAE) are Extracellular-facing. The chain crosses the membrane as a helical span at residues 100-120 (YPWAFGICLMSLFLLFFTEII). Residues 121-262 (THYFVAKTLG…EEDKEQYLNQ (142 aa)) lie on the Cytoplasmic side of the membrane. Phosphoserine is present on residues S148, S149, S162, and S170. T188 bears the Phosphothreonine mark. Residues 263–283 (ILAVFILEFGIIFHSVFVGLS) form a helical membrane-spanning segment. Topologically, residues 284–290 (LSVAGEE) are extracellular. The chain crosses the membrane as a helical span at residues 291–311 (FETLFIVLTFHQMFEGLGLGT). Topologically, residues 312–326 (RVAETNWPESKKYMP) are cytoplasmic. A helical transmembrane segment spans residues 327–347 (WLMGLAFTLTSPIAVAVGIGV). Residues 348–358 (RHSWIPGSRRA) lie on the Extracellular side of the membrane. The helical transmembrane segment at 359–379 (LIANGVFDSISSGILIYTGLV) threads the bilayer. At 380 to 400 (ELMAHEFLYSNQFKGPDGLKK) the chain is on the cytoplasmic side. The helical transmembrane segment at 401-421 (MLSAYLIMCCGAALMALLGKW) threads the bilayer. A topological domain (extracellular) is located at residue A422.

The protein belongs to the ZIP transporter (TC 2.A.5) family.

It localises to the membrane. In terms of biological role, low-affinity zinc transport protein. Active in zinc-replete cells and is time-, temperature- and concentration-dependent and prefers zinc over other metals as its substrate. This Saccharomyces cerevisiae (strain ATCC 204508 / S288c) (Baker's yeast) protein is Zinc-regulated transporter 2 (ZRT2).